The chain runs to 146 residues: Phospholipase A2 OS2 (146 aa).

The signal sequence occupies residues 1–27 (MHPAHLLVLLAVCVSLLGASDIPPLPL). 7 disulfides stabilise this stretch: Cys-38-Cys-99, Cys-54-Cys-145, Cys-56-Cys-72, Cys-71-Cys-126, Cys-78-Cys-119, Cys-88-Cys-112, and Cys-106-Cys-117. Ca(2+) contacts are provided by Tyr-55, Gly-57, and Gly-59. His-75 is an active-site residue. Asp-76 serves as a coordination point for Ca(2+). Residue Asp-120 is part of the active site.

Belongs to the phospholipase A2 family. Group I subfamily. D49 sub-subfamily. In terms of assembly, monomer. Ca(2+) serves as cofactor. As to expression, expressed by the venom gland.

It is found in the secreted. The catalysed reaction is a 1,2-diacyl-sn-glycero-3-phosphocholine + H2O = a 1-acyl-sn-glycero-3-phosphocholine + a fatty acid + H(+). Functionally, snake venom phospholipase A2 (PLA2) that shows high presynaptic neurotoxicity in vertebrata that is independent of catalytic activity, as well as local myotoxicity when intramuscularly injected into mice. Blocks acetylcholine release in Aplysia neurons, and potentiates pro-inflammatory cellular signaling. Potentiates glutamate excitoxicity when coinjected into brain of rats. May act by binding in a calcium-dependent fashion and with high affinity to a neuronal-type (N-type) PLA2 receptor, and with very high affinity to a muscle-type (M-type) PLA2 receptor. In vitro, shows a high-specific activity on E.coli membranes and is more efficient on the anionic phospholipid POPG than on the anionic phospholipid POPS or the zwitterionic phospholipid POPC. Exerts catalytically-independent anti-HIV (IC(50) is 35 nM) activity and catalytically-dependent antimalarial activity (IC(50) is 3.1 nM when tested on P.falciparum grown in serum that contains lipoproteins). PLA2 catalyzes the calcium-dependent hydrolysis of the 2-acyl groups in 3-sn-phosphoglycerides. The protein is Phospholipase A2 OS2 of Oxyuranus scutellatus scutellatus (Australian taipan).